The primary structure comprises 403 residues: uncharacterized protein (403 aa).

6 helical membrane-spanning segments follow: residues Phe31–Phe51, Leu186–Val206, Ile238–Ile258, Leu268–Cys288, Leu303–Val323, and Leu355–Leu375.

The protein to B.subtilis YhaP.

It localises to the cell membrane. This is an uncharacterized protein from Methanocaldococcus jannaschii (strain ATCC 43067 / DSM 2661 / JAL-1 / JCM 10045 / NBRC 100440) (Methanococcus jannaschii).